Consider the following 423-residue polypeptide: Lipoyl synthase 1, mitochondrial (423 aa).

Residues cysteine 127, cysteine 132, cysteine 138, cysteine 159, cysteine 163, cysteine 166, and serine 375 each coordinate [4Fe-4S] cluster. A Radical SAM core domain is found at 142-364; that stretch reads DEEEGTATAT…EEEAMAMGFL (223 aa).

It belongs to the radical SAM superfamily. Lipoyl synthase family. It depends on [4Fe-4S] cluster as a cofactor.

It is found in the mitochondrion. The catalysed reaction is [[Fe-S] cluster scaffold protein carrying a second [4Fe-4S](2+) cluster] + N(6)-octanoyl-L-lysyl-[protein] + 2 oxidized [2Fe-2S]-[ferredoxin] + 2 S-adenosyl-L-methionine + 4 H(+) = [[Fe-S] cluster scaffold protein] + N(6)-[(R)-dihydrolipoyl]-L-lysyl-[protein] + 4 Fe(3+) + 2 hydrogen sulfide + 2 5'-deoxyadenosine + 2 L-methionine + 2 reduced [2Fe-2S]-[ferredoxin]. The protein operates within protein modification; protein lipoylation via endogenous pathway; protein N(6)-(lipoyl)lysine from octanoyl-[acyl-carrier-protein]: step 2/2. Its function is as follows. Catalyzes the radical-mediated insertion of two sulfur atoms into the C-6 and C-8 positions of the octanoyl moiety bound to the lipoyl domains of lipoate-dependent enzymes, thereby converting the octanoylated domains into lipoylated derivatives. The polypeptide is Lipoyl synthase 1, mitochondrial (Trypanosoma cruzi (strain CL Brener)).